The chain runs to 866 residues: N-alpha-acetyltransferase 15, NatA auxiliary subunit (866 aa).

TPR repeat units follow at residues 46–79 (GETL…DLKS), 80–113 (HVCW…DKDN), 148–184 (RASW…SPDK), and 224–257 (LAVE…NPEN). K262 is modified (N6-acetyllysine). S302 bears the Phosphoserine mark. 3 TPR repeats span residues 374 to 407 (LWVQ…TPTL), 409 to 441 (ELFL…DTAD), and 485 to 522 (MWFQ…TDDQ). The interaction with HYPK stretch occupies residues 500-866 (KFGEALKKCY…AEAEELANEI (367 aa)). Residues S537 and S588 each carry the phosphoserine modification. The span at 579–594 (EHEADTANMSDKELKK) shows a compositional bias: basic and acidic residues. The disordered stretch occupies residues 579–642 (EHEADTANMS…EEIGGPKEEL (64 aa)). Positions 595–604 (LRNKQRRAQK) are enriched in basic residues. Basic and acidic residues predominate over residues 606–621 (AQIEEEKKNAEKEKQQ). A TPR 8 repeat occupies 672–705 (IETHLFAFEIYFRKEKFLLMLQSVKRAFAIDSSH). 2 positions are modified to N6-acetyllysine: K735 and K756. S855 and S856 each carry phosphoserine.

Component of the N-terminal acetyltransferase A (NatA) complex composed of NAA10 or probably NAA11 and NAA15. Interacts with XRCC6, NAA50 and XRCC5. Associates with HYPK when in a complex with NAA10. Interaction with HYPK reduces the capacity to interact with NAA50. Cleaved by caspases during apoptosis.

The protein localises to the cytoplasm. It is found in the nucleus. Functionally, auxillary subunit of the N-terminal acetyltransferase A (NatA) complex which displays alpha (N-terminal) acetyltransferase activity. The NAT activity may be important for vascular, hematopoietic and neuronal growth and development. Required to control retinal neovascularization in adult ocular endothelial cells. In complex with XRCC6 and XRCC5 (Ku80), up-regulates transcription from the osteocalcin promoter. The chain is N-alpha-acetyltransferase 15, NatA auxiliary subunit (NAA15) from Pongo abelii (Sumatran orangutan).